Consider the following 505-residue polypeptide: Forkhead box protein O4 (505 aa).

Disordered regions lie at residues 1 to 66 (MDPE…HSEP), 175 to 244 (SSWW…SPCP), and 257 to 276 (RPRS…PMRP). Thr32 bears the Phosphothreonine; by PKB/AKT1 mark. The required for interaction with FOXK1 stretch occupies residues 97-215 (RRNAWGNQSY…RGRSKGPKKK (119 aa)). Residues 100 to 188 (AWGNQSYAEL…MLNPDGGKGG (89 aa)) constitute a DNA-binding region (fork-head). Residue Ser197 is modified to Phosphoserine; by PKB/AKT1. A compositionally biased stretch (basic residues) spans 205-216 (LRGRSKGPKKKP). The span at 257–271 (RPRSSSNASTVSTRL) shows a compositional bias: polar residues. Residue Ser262 is modified to Phosphoserine; by PKB/AKT1.

In terms of assembly, interacts with CREBBP/CBP, MYOCD, SIRT1, SRF and YWHAZ. Acetylated by CREBBP/CBP and deacetylated by SIRT1. Binding of YWHAZ inhibits DNA-binding. Interacts with USP7; the interaction is enhanced in presence of hydrogen peroxide and occurs independently of TP53. Interacts with NLK, and this inhibits monoubiquitination and transcriptional activity. Interacts with FOXK1; the interaction inhibits MEF2C transactivation activity. Acetylation by CREBBP/CBP is induced by oxidative stress and inhibits transcriptional activity. Deacetylation by SIRT1 is NAD-dependent and stimulates transcriptional activity. In terms of processing, phosphorylation by PKB/AKT1 inhibits transcriptional activity and is responsible for cytoplasmic localization. May be phosphorylated at multiple sites by NLK. Post-translationally, monoubiquitinated; monoubiquitination is induced by oxidative stress and reduced by deacetylase inhibitors; results in its relocalization to the nucleus and its increased transcriptional activity. Deubiquitinated by USP7; deubiquitination is induced by oxidative stress; enhances its interaction with USP7 and consequently, deubiquitination; increases its translocation to the cytoplasm and inhibits its transcriptional activity. Hydrogene-peroxide-induced ubiquitination and USP7-mediated deubiquitination have no major effect on its protein stability. In terms of tissue distribution, strongly expressed in brown adipose tissue and weakly in white adipose tissue (at protein level). Expressed in skeletal muscle.

The protein localises to the cytoplasm. The protein resides in the nucleus. In terms of biological role, transcription factor involved in the regulation of the insulin signaling pathway. Binds to insulin-response elements (IREs) and can activate transcription of IGFBP1. Down-regulates expression of HIF1A and suppresses hypoxia-induced transcriptional activation of HIF1A-modulated genes. Also involved in negative regulation of the cell cycle. Involved in increased proteasome activity in embryonic stem cells (ESCs) by activating expression of PSMD11 in ESCs, leading to enhanced assembly of the 26S proteasome, followed by higher proteasome activity. Represses smooth muscle cell differentiation by inhibiting the transcriptional coactivator activity of myocardin. This Mus musculus (Mouse) protein is Forkhead box protein O4 (Foxo4).